Reading from the N-terminus, the 245-residue chain is Uridylate kinase (245 aa).

Position 20-23 (20-23 (KLSG)) interacts with ATP. Glycine 60 is a UMP binding site. ATP-binding residues include glycine 61 and arginine 65. UMP-binding positions include aspartate 80 and 141-148 (AGLPYFST). ATP-binding residues include tyrosine 175 and aspartate 178.

Belongs to the UMP kinase family. In terms of assembly, homohexamer.

It localises to the cytoplasm. The enzyme catalyses UMP + ATP = UDP + ADP. The protein operates within pyrimidine metabolism; CTP biosynthesis via de novo pathway; UDP from UMP (UMPK route): step 1/1. With respect to regulation, inhibited by UTP. Catalyzes the reversible phosphorylation of UMP to UDP. The polypeptide is Uridylate kinase (Arthrobacter sp. (strain FB24)).